A 413-amino-acid chain; its full sequence is Protein arginine N-methyltransferase 2 (413 aa).

2 disordered regions span residues 65–85 (DDEEPNGVQTNGEQGDEQKSV) and 148–178 (ELEDDDEEEEEGQEEQTGTEEVEVEGESAPQ). Residues 148–173 (ELEDDDEEEEEGQEEQTGTEEVEVEG) are compositionally biased toward acidic residues. One can recognise an RMT2 domain in the interval 192–413 (TGPDVTNSRY…YRLPLCKYMD (222 aa)). Residues tyrosine 201, methionine 230, 250–255 (HGMGIV), 271–273 (EAH), 298–299 (WQ), and aspartate 318 contribute to the S-adenosyl-L-methionine site.

This sequence belongs to the class I-like SAM-binding methyltransferase superfamily. RMT2 methyltransferase family. Monomer.

The protein resides in the cytoplasm. The protein localises to the nucleus. S-adenosyl-L-methionine-dependent protein-arginine N-methyltransferase that methylates the delta-nitrogen atom of arginine residues to form N5-methylarginine (type IV) in target proteins. Monomethylates ribosomal protein L12. This Aspergillus oryzae (strain ATCC 42149 / RIB 40) (Yellow koji mold) protein is Protein arginine N-methyltransferase 2.